The chain runs to 131 residues: Period circadian protein (131 aa).

The tract at residues 29-109 is disordered; sequence VTAPVELDPP…NSAGGASGGV (81 aa). A compositionally biased stretch (low complexity) spans 71-93; sequence SGNFTTGSNVRMSSVTNTSNAGT. Residues 94–109 are compositionally biased toward gly residues; that stretch reads GTSGGGNSAGGASGGV.

In terms of assembly, forms a heterodimer with timeless (TIM); the complex then translocates into the nucleus. Phosphorylated with a circadian rhythmicity, probably by the double-time protein (dbt). Phosphorylation could be implicated in the stability of per monomer and in the formation of heterodimer per-tim.

The protein localises to the nucleus. Its subcellular location is the cytoplasm. The protein resides in the perinuclear region. Its function is as follows. Essential for biological clock functions. Determines the period length of circadian and ultradian rhythms; an increase in PER dosage leads to shortened circadian rhythms and a decrease leads to lengthened circadian rhythms. Essential for the circadian rhythmicity of locomotor activity, eclosion behavior, and for the rhythmic component of the male courtship song that originates in the thoracic nervous system. The biological cycle depends on the rhythmic formation and nuclear localization of the TIM-PER complex. Light induces the degradation of TIM, which promotes elimination of PER. Nuclear activity of the heterodimer coordinatively regulates PER and TIM transcription through a negative feedback loop. Behaves as a negative element in circadian transcriptional loop. Does not appear to bind DNA, suggesting indirect transcriptional inhibition. The polypeptide is Period circadian protein (per) (Zaprionus tuberculatus (Vinegar fly)).